We begin with the raw amino-acid sequence, 177 residues long: PRELI domain-containing protein 2 (177 aa).

The 175-residue stretch at 1-175 (MGVTVDVHQV…LLKEQCGSPL (175 aa)) folds into the PRELI/MSF1 domain.

This Mus musculus (Mouse) protein is PRELI domain-containing protein 2 (Prelid2).